A 91-amino-acid chain; its full sequence is Small ribosomal subunit protein uS19 (91 aa).

This sequence belongs to the universal ribosomal protein uS19 family.

In terms of biological role, protein S19 forms a complex with S13 that binds strongly to the 16S ribosomal RNA. This Laribacter hongkongensis (strain HLHK9) protein is Small ribosomal subunit protein uS19.